A 303-amino-acid polypeptide reads, in one-letter code: MIKQRTLKNIIRATGVGLHSGEKVYLTLKPAPVDTGIVFVRADLDPVVQIPARAENVGETTMSTTLVNGDVKVDTVEHLLSAMAGLGIDNAYVELSASEVPIMDGSAGPFVFLIQSAGLEEQDAAKKFIRILREVTVEDGDKRATFVPFEGFKVSFEIDFDHPVFRDRTQSASVDFSSTSFVKEVSRARTFGFMSDIEYLRKHNLALGGSVENAIVVDADGVLNEDGLRYEDEFVKHKILDAIGDLYLLGNSLIGEFKGFKSGHALNNQLLRKLIEQTDAWEVVTFEDASTAPISYMRPVAAV.

The Zn(2+) site is built by histidine 78, histidine 237, and aspartate 241. Histidine 264 functions as the Proton donor in the catalytic mechanism.

It belongs to the LpxC family. It depends on Zn(2+) as a cofactor.

The catalysed reaction is a UDP-3-O-[(3R)-3-hydroxyacyl]-N-acetyl-alpha-D-glucosamine + H2O = a UDP-3-O-[(3R)-3-hydroxyacyl]-alpha-D-glucosamine + acetate. The protein operates within glycolipid biosynthesis; lipid IV(A) biosynthesis; lipid IV(A) from (3R)-3-hydroxytetradecanoyl-[acyl-carrier-protein] and UDP-N-acetyl-alpha-D-glucosamine: step 2/6. Functionally, catalyzes the hydrolysis of UDP-3-O-myristoyl-N-acetylglucosamine to form UDP-3-O-myristoylglucosamine and acetate, the committed step in lipid A biosynthesis. This chain is UDP-3-O-acyl-N-acetylglucosamine deacetylase, found in Pseudomonas fluorescens (strain SBW25).